An 875-amino-acid chain; its full sequence is Ubiquitin-protein ligase E3A (875 aa).

The C4-type; atypical zinc-finger motif lies at 44–83 (CGNEACTNEFCASCPTFLRMDNNAAAIKALELYKINAKLC). Residues 175–186 (KEELKSLQAKDE) show a composition bias toward basic and acidic residues. Residues 175–226 (KEELKSLQAKDEDKDEDEKEKAACSAAAMEEDSEASSSRIGDSSQGDNNLQK) are disordered. The span at 213–225 (RIGDSSQGDNNLQ) shows a compositional bias: polar residues. Position 218 is a phosphoserine (serine 218). The interval 401-418 (IPESSELTLQELLGEERR) is E6-binding. The tract at residues 418-517 (RNKKGPRVDP…TVLYSLVQGQ (100 aa)) is interaction with HCV core protein. Tyrosine 659 bears the Phosphotyrosine; by ABL1 mark. Residues 776–875 (YDGGYTRDSV…ITYAKGFGML (100 aa)) enclose the HECT domain. Residue cysteine 843 is the Glycyl thioester intermediate of the active site.

In terms of assembly, the active form is probably a homotrimer. Binds UBQLN1 and UBQLN2. Interacts with the 26S proteasome. Interacts with BPY2. Interacts with HIF1AN, MAPK6 and NEURL4; interaction with MAPK6 may be mediated by NEURL4. Interacts with the proteasomal subunit PSMD4. Interacts with ESR1 and WBP2. Interacts with BMAL1. Interacts with ARC. As to quaternary structure, (Microbial infection) Interacts with HCV core protein and targets it to degradation. (Microbial infection) Interacts with the E6 protein of the cancer-associated human papillomavirus types 16 and 18. The E6/E6-AP complex binds to and targets the p53/TP53 tumor-suppressor protein for ubiquitin-mediated proteolysis. In terms of processing, phosphorylation at Tyr-659 by ABL1 impairs E3 ligase activity and protects p53/TP53 from degradation in (HPV)-infected cells.

The protein resides in the cytoplasm. The protein localises to the nucleus. The catalysed reaction is S-ubiquitinyl-[E2 ubiquitin-conjugating enzyme]-L-cysteine + [acceptor protein]-L-lysine = [E2 ubiquitin-conjugating enzyme]-L-cysteine + N(6)-ubiquitinyl-[acceptor protein]-L-lysine.. It functions in the pathway protein modification; protein ubiquitination. In terms of biological role, E3 ubiquitin-protein ligase which accepts ubiquitin from an E2 ubiquitin-conjugating enzyme in the form of a thioester and transfers it to its substrates. Several substrates have been identified including the BMAL1, ARC, LAMTOR1, RAD23A and RAD23B, MCM7 (which is involved in DNA replication), annexin A1, the PML tumor suppressor, and the cell cycle regulator CDKN1B. Additionally, may function as a cellular quality control ubiquitin ligase by helping the degradation of the cytoplasmic misfolded proteins. Finally, UBE3A also promotes its own degradation in vivo. Plays an important role in the regulation of the circadian clock: involved in the ubiquitination of the core clock component BMAL1, leading to its proteasomal degradation. Acts as transcriptional coactivator of progesterone receptor PGR upon progesterone hormone activation. Acts as a regulator of synaptic development by mediating ubiquitination and degradation of ARC. Required for synaptic remodeling in neurons by mediating ubiquitination and degradation of LAMTOR1, thereby limiting mTORC1 signaling and activity-dependent synaptic remodeling. Synergizes with WBP2 in enhancing PGR activity. (Microbial infection) Catalyzes the high-risk human papilloma virus E6-mediated ubiquitination of p53/TP53, contributing to the neoplastic progression of cells infected by these viruses. The chain is Ubiquitin-protein ligase E3A from Homo sapiens (Human).